We begin with the raw amino-acid sequence, 368 residues long: Hydrophobic dipeptide epimerase (368 aa).

Substrate-binding positions include Thr143 and 168 to 170; that span reads KIK. Mg(2+) is bound by residues Asp197, Glu225, and Asp253. Residues Lys277 and 329 to 331 each bind substrate; that span reads DMD.

The protein belongs to the mandelate racemase/muconate lactonizing enzyme family. Mg(2+) is required as a cofactor.

Catalyzes the epimerization of various hydrophobic dipeptides, such as L-Ala-L-Phe. Has epimerase activity with L-Ala-L-Thr, L-Ala-L-Met, L-Ala-L-Tyr, as well as L-Phe-L-Met, L-Phe-L-Ser and L-Phe-L-Thr (in vitro). In Citrifermentans bemidjiense (strain ATCC BAA-1014 / DSM 16622 / JCM 12645 / Bem) (Geobacter bemidjiensis), this protein is Hydrophobic dipeptide epimerase.